Here is a 493-residue protein sequence, read N- to C-terminus: Beta-hexosaminidase Amuc_2018 (493 aa).

The first 21 residues, 1–21, serve as a signal peptide directing secretion; that stretch reads MARPLPILGGILLSFSPPAEA. R122 contributes to the substrate binding site. Active-site charge relay system residues include D151 and H214. Zn(2+) contacts are provided by C227 and C247. Substrate is bound at residue D278. Catalysis depends on E279, which acts as the Charge relay system. Residues C288 and C291 each coordinate Zn(2+). Substrate is bound by residues W345, 373 to 375, and 421 to 423; these read YLD and WAE.

This sequence belongs to the glycosyl hydrolase 20 family.

The enzyme catalyses Hydrolysis of terminal non-reducing N-acetyl-D-hexosamine residues in N-acetyl-beta-D-hexosaminides.. With respect to regulation, significantly inhibited by the addition of sodium dodecyl sulfate (SDS), but not by EDTA, urea, 2-mercaptoethanol or Triton X-100. Strongly inhibited by Cu2(+) ions, in case of which the activity is decreased by 70%. No significant inhibition with Al(3+), Fe(3+), Ca(2+), Cd(2+), Mg(2+), Mn(2+), Ni(2+) and Zn(2+) ions. Strongly inhibited by PugNAc (O-(2-acetamido-2-deoxy-D-glucopyranosylideneamino) N-phenylcarbamate) in the sub-micromolar concentration range. PugNAc at a concentration of 0.5 mM decreases the activity by 50% and the addition of 1 mM PugNAc fully inhibits the enzyme. No significant reduction in the activity by alkylation using N-ethylmaleimide or 2-iodoacetamide. Its function is as follows. Hydrolyzes terminal GlcNAc residues from terminally unbranched N-glycans and from chitobiose. Hydrolyzes beta-1,6-linked N-acetylglucosamine and beta-1,4-linked N-acetylgalactosamine from pNP-alpha-GalNAc[beta1,3Gal]beta1,6GlcNAc and pNP-beta-GlcNAc-beta1,4-GalNAc substrates, respectively, as well as beta-1,2-linked N-acetylglucosamine units from the non-reducing end of N-glycans. Hydrolyzes GlcNAc residues linked to alpha1,3- or alpha1,6-mannose branch, but has low activity on substrates with more than one GlcNAc residue on one of the mannose branches. Releases terminal GlcNAc moieties from the N-glycopeptide Gly-Glu-Asn-(GlcNAc2Man3GlcNAc2)-Arg with high efficiency. Has moderate hydrolytic activity on the chitobiose moiety of N-glycopeptide substrate Gly-Glu-Asn-(GlcNAc2)-Arg. Does not hydrolyze GlcNAc residues from N-glycan structures bearing a bisecting GlcNAc moiety (beta1,4-linked GlcNAc to the beta1,4-linked core mannose). Potentially capable of cleaving the specific glycoside linkages in the process of mucin degradation in human intestinal tract. Hydrolyzes synthetic substrate pNP-beta-GlcNAc with high activity and pNP-beta-GalNAc to a lesser extent. Does not hydrolyze pNP-beta-glucose, pNP-beta-galactose, pNP-alpha-glucose, pNP-alpha-galactose, pNP-alpha-GlcNAc or pNP-alpha-fucose. This chain is Beta-hexosaminidase Amuc_2018, found in Akkermansia muciniphila (strain ATCC BAA-835 / DSM 22959 / JCM 33894 / BCRC 81048 / CCUG 64013 / CIP 107961 / Muc).